Here is a 438-residue protein sequence, read N- to C-terminus: MANYISSVLKSLLLLLHLVFLIQQHVDSASIVKFLPGFEGSLPFELETGYIGIGEEEEVQLFYYFIKSERNPKEDPLLLWLSGGPGCSSISGLLFENGPLAMKLDVYNGTLPSLVPTTYSWTKTSSMIFLDQPVGTGFSYSRTQQYNKPSDSGEAKRIHEFLQKWLSKHQEFSSNPFYVAGDSYSGMVVPATVQEISKGNYQCCSPPINLQGYVLGNPITEHAIDYNYRIPFAHGMALISDELYESLKRVCKGEYVDPRDTECLKLVEEFSKCTKGVCQEVVIKPLCVTETPNCYIYRYLLTTYWVNDVNVRKALQINKESIGEWVRCYFGIPYTHDIKSSVPYHMNNSINGYRSLIYSGDHDLNVPFLATQAWVRSLNYSIIDNWRPWMIKDQIGGYTKTYANKMTFATVRGGGHTAEYKPYETYIMFHRWINGQPL.

An N-terminal signal peptide occupies residues 1-28 (MANYISSVLKSLLLLLHLVFLIQQHVDS). 3 cysteine pairs are disulfide-bonded: Cys-87–Cys-328, Cys-251–Cys-263, and Cys-287–Cys-294. Asn-108 carries N-linked (GlcNAc...) asparagine glycosylation. Residue Ser-183 is part of the active site. Asn-347 is a glycosylation site (N-linked (GlcNAc...) asparagine). Asp-363 is a catalytic residue. Asn-379 carries an N-linked (GlcNAc...) asparagine glycan. Residue His-416 is part of the active site.

The protein belongs to the peptidase S10 family. Expressed in seedlings, roots, and siliques.

Its subcellular location is the secreted. In terms of biological role, probable carboxypeptidase. This is Serine carboxypeptidase-like 5 (SCPL5) from Arabidopsis thaliana (Mouse-ear cress).